Reading from the N-terminus, the 252-residue chain is Tricin synthase 1 (252 aa).

S-adenosyl-L-methionine contacts are provided by residues Ser-65, Glu-87, 89–90 (GV), Ser-95, and Asp-113. Asp-168 is a binding site for a divalent metal cation. Asp-170 contacts S-adenosyl-L-methionine. Residues Asp-194 and Asn-195 each coordinate a divalent metal cation.

It belongs to the class I-like SAM-binding methyltransferase superfamily. Cation-dependent O-methyltransferase family. CCoAMT subfamily. The cofactor is Mg(2+). Mn(2+) serves as cofactor. It depends on Co(2+) as a cofactor. Ubiquitous. Highest expression in stems and roots.

It is found in the nucleus. The catalysed reaction is tricetin + 2 S-adenosyl-L-methionine = 3',5'-di-O-methyltricetin + 2 S-adenosyl-L-homocysteine + 2 H(+). Functionally, catalyzes the stepwise methylation of tricetin to its 3'-mono- and 3',5'-dimethyl ethers. No 3',4',5'-trimethylated ester derivatives are produced. Can use caffeoyl-CoA, 5-hydroxyferulic acid, luteolin, tricetin, quercetin, myrcetin and 7,8-dihydroxyflavone as substrates, but not naringenin, apigenin or kaempferol. The 2,3-double bond and the O-dihydroxyl group of the substrate are both required for catalytic activity of the enzyme. The protein is Tricin synthase 1 (ROMT-15) of Oryza sativa subsp. japonica (Rice).